Reading from the N-terminus, the 149-residue chain is Transcriptional repressor NrdR (149 aa).

Residues 3–34 fold into a zinc finger; sequence CPFCSATDTKVIDSRLVSDGHQVRRRRQCLAC. Residues 49–139 form the ATP-cone domain; it reads PKVIKSNGNR…VYRSFEDIKE (91 aa).

Belongs to the NrdR family. Zn(2+) serves as cofactor.

Its function is as follows. Negatively regulates transcription of bacterial ribonucleotide reductase nrd genes and operons by binding to NrdR-boxes. This chain is Transcriptional repressor NrdR, found in Aliivibrio salmonicida (strain LFI1238) (Vibrio salmonicida (strain LFI1238)).